Here is a 791-residue protein sequence, read N- to C-terminus: Cellobionic acid phosphorylase (791 aa).

The Proton donor role is filled by aspartate 478.

It belongs to the glycosyl hydrolase 94 family. Cellobionic acid phosphorylase subfamily. As to quaternary structure, homodimer.

It catalyses the reaction 4-O-beta-D-glucopyranosyl-D-gluconate + phosphate = D-gluconate + alpha-D-glucose 1-phosphate. It participates in glycan metabolism; cellulose degradation. Its function is as follows. Catalyzes the reversible phosphorolysis of cellobionic acid (4-O-beta-D-glucopyranosyl-D-gluconate), a probable step in cellulose degradation. May be part of a metabolic pathway where cellobionic acid is converted into alpha-D-glucose 1-phosphate and D-gluconic acid to enter glycolysis and the pentose phosphate pathway, respectively. Produces 4-O-beta-D-glucopyranosyl-D-glucuronate from alpha-D-glucose 1-phosphate and D-glucuronate with low activity in the synthetic direction. This is Cellobionic acid phosphorylase from Neurospora crassa (strain ATCC 24698 / 74-OR23-1A / CBS 708.71 / DSM 1257 / FGSC 987).